The following is a 347-amino-acid chain: Microneme protein 21 (347 aa).

It localises to the cytoplasmic vesicle. The protein resides in the secretory vesicle. It is found in the microneme. Its subcellular location is the secreted. The polypeptide is Microneme protein 21 (Toxoplasma gondii).